Here is a 97-residue protein sequence, read N- to C-terminus: uncharacterized protein (97 aa).

Transmembrane regions (helical) follow at residues 5-25 (TLVAIVVFFGNGEPFHVSLSV), 27-47 (MVFVLLLSSTRIHEVVVLICY), and 77-97 (IISINDICIYGCIALTVVFIL).

The protein localises to the membrane. This is an uncharacterized protein from Saccharomyces cerevisiae (strain ATCC 204508 / S288c) (Baker's yeast).